Here is a 231-residue protein sequence, read N- to C-terminus: Large ribosomal subunit protein uL1 (231 aa).

The protein belongs to the universal ribosomal protein uL1 family. In terms of assembly, part of the 50S ribosomal subunit.

Its function is as follows. Binds directly to 23S rRNA. The L1 stalk is quite mobile in the ribosome, and is involved in E site tRNA release. In terms of biological role, protein L1 is also a translational repressor protein, it controls the translation of the L11 operon by binding to its mRNA. This chain is Large ribosomal subunit protein uL1, found in Legionella pneumophila (strain Paris).